The chain runs to 273 residues: Zinc finger protein 80 (273 aa).

The C2H2-type 1 zinc finger occupies 49 to 71 (YKCKECGSVFNKNSLLVRHQQIH). A C2H2-type 2; degenerate zinc finger spans residues 77-99 (YEYQECGKAFPEKVDFVRHMRIH). The C2H2-type 3; atypical zinc finger occupies 105 to 127 (CKCVECRKVFNRRSHLLCYRQIH). C2H2-type zinc fingers lie at residues 133 to 155 (YECS…RVTH), 161 to 183 (FGCK…MKIH), 187 to 211 (KPCK…SMTH), and 217 to 239 (YECK…TRSH).

It belongs to the krueppel C2H2-type zinc-finger protein family.

It is found in the nucleus. Functionally, may be involved in transcriptional regulation. The chain is Zinc finger protein 80 (ZNF80) from Pan troglodytes (Chimpanzee).